The primary structure comprises 482 residues: UDP-N-acetylmuramate--L-alanine ligase (482 aa).

111 to 117 (GTHGKTT) contributes to the ATP binding site.

The protein belongs to the MurCDEF family.

It localises to the cytoplasm. It catalyses the reaction UDP-N-acetyl-alpha-D-muramate + L-alanine + ATP = UDP-N-acetyl-alpha-D-muramoyl-L-alanine + ADP + phosphate + H(+). It functions in the pathway cell wall biogenesis; peptidoglycan biosynthesis. Cell wall formation. This Symbiobacterium thermophilum (strain DSM 24528 / JCM 14929 / IAM 14863 / T) protein is UDP-N-acetylmuramate--L-alanine ligase.